A 334-amino-acid chain; its full sequence is WD repeat domain 54 (334 aa).

WD repeat units follow at residues 162 to 206 (GHQT…TLLT), 208 to 247 (IAGF…LHIQ), and 250 to 289 (AHAR…ESGS).

In terms of assembly, homodimer and homotrimer; forms tight forms of dimers and trimers. Interacts with IZUMO1 and IZUMO1R/JUNO. In terms of processing, cross-linked to tightly form both dimers and trimers by TGM2. Cross-linking enhances the activation of EGF receptor-mediated signaling pathway. Cross-linking is inhibited by EGF. Post-translationally, ubiquitinated. EGF increases ubiquitination. Widely expressed in the ovary and testis (at protein level).

The protein resides in the vesicle. It is found in the cytoplasm. The protein localises to the cell membrane. Plays a role in the adhesion and fusion of the sperm-oocyte membrane through its interactions with IZUMO1 and IZUMO1R/JUNO. When cross-linked to form dimers and trimers, it has a regulatory effect on ERK signaling pathway activity in response to EGF stimulation. Colocalizes with the EGF receptor in WDR54-specific vesicle where it sustains the internalization and controls the degradation of the EGF receptor after EGF stimulation. This chain is WD repeat domain 54 (Wdr54), found in Rattus norvegicus (Rat).